A 596-amino-acid polypeptide reads, in one-letter code: Elongation factor 4 (596 aa).

In terms of domain architecture, tr-type G spans 2-183 (KNIRNFSIIA…TIITKIPAPK (182 aa)). GTP-binding positions include 14-19 (DHGKST) and 130-133 (NKID).

This sequence belongs to the TRAFAC class translation factor GTPase superfamily. Classic translation factor GTPase family. LepA subfamily.

Its subcellular location is the cell inner membrane. It carries out the reaction GTP + H2O = GDP + phosphate + H(+). In terms of biological role, required for accurate and efficient protein synthesis under certain stress conditions. May act as a fidelity factor of the translation reaction, by catalyzing a one-codon backward translocation of tRNAs on improperly translocated ribosomes. Back-translocation proceeds from a post-translocation (POST) complex to a pre-translocation (PRE) complex, thus giving elongation factor G a second chance to translocate the tRNAs correctly. Binds to ribosomes in a GTP-dependent manner. This is Elongation factor 4 from Campylobacter lari (strain RM2100 / D67 / ATCC BAA-1060).